The following is a 1311-amino-acid chain: MGTASSLVNPGEVIEDTYGGGGGEACVIPVEVKPKARLLRSSFRRGPRVIGASFKSTASVDLEYAAEYERLKKEYEIFRVSKNNEIASMQKKEVKLDEENKRLRAELQALQKTYQKILREKESAVEAKYQAMERAATFEHDRDKVKRQFKIFRETKEKEIQDLLRAKRDLEAKLQRLQAQGIQVFDPGESDSDDNGTELTVPGTQCEYWTSGGLGSEPSIGSMMQLQQSFRGPEFAHSSIDVEGPFANVNRDDWDAAVASLLQVTPLFSQSLWSNTVRCYLMYTAETQAEVKIFLKEYSPKLQRMCETSGYFFQVTFFPEECENQYFAVRKWEIEKSSIVILFICSSLPSCLQEDCEEAFLKNTEAKPCLIYHRIEDGRSDSEGLKQLLEQDTNKANKTKIVDHYGDPVEGANKIYCQLEQVINQDLLGIEITDPNAKDDSATKEEDDFWDVLWDVHDEQEQMEAFQQASHSICELGFQKYYDRLNDLVAAPAPIPPLLISGGPGSGKSLLLSKWIQLQQKHSPNTLMLYHFVGRPLSSSSEPSLMIKRLFLKLMQHSWSVSSLSLDPAKFLEEFPHWLEKLSIRYQGNIIIIIDSIDHIQQSEKHMKWLIDPLPVNVRVIVSVNVETCPQAWRLWPTLHLDPLNSKDVKSLINMECGRANIILTKEQERKLERHCRSATTCNALYVTLIAKLLTWAGSTGNIDDVLQLCLQCQDTVSLYRLALHSVQEVMPSAKDKEFMREILCFISASRNGVSECELMELCPGLTWPVLTSLIFHLYTLVLLKYSCGLIQFQHLQEILSFNILNFKAWDAVNLEYMQGDQSIISEYREKLIQHFNAQLSCDRVTWRSADELTWLYQQQGEKQKLHRCLMNLFVSQNLYKRGHFAELLSYWQLVGKDKISMASEYFDALKQYERSCEGEEKMTSLADLYETLGRFLKDLGLLSQAVTPLQRSLEIRETALDPDHPSVAQSLHQLAGVYVQSKKFGNAEQLYKQALEISENAYGSEHMRVARELDALAVLYQKQNKFEQAEQLRKKSLKIRQKSARRKGSMYGFALLRRRALQLEELTLGKDTSDNARTLNELGVLYYLQNNLETAETFLKRSLEMRERVLGADHPDCAQSINNLAALYNEKKQYDKAEELYERALDIRRRALSPDHPSLAYTVKHLAVLYKRKGKLDKAVPLYELAVEIRQKSFGPKHPSVATALVNLAVLYCQMKKQAEASPLYERAMKIYEDSLGRMHPRVGETLKNLAVLRYEEGDFEKAAELYKRAMEIKETETSVLGAKAHSGHSSSGGDTYSVQNALPVCAFPE.

Residues 81–183 (SKNNEIASMQ…LQRLQAQGIQ (103 aa)) are a coiled coil. TPR repeat units lie at residues 889 to 923 (LSYW…EEKM), 927 to 960 (ADLY…RETA), 969 to 1002 (AQSL…SENA), 1011 to 1044 (AREL…RQKS), 1077 to 1110 (ARTL…RERV), 1119 to 1152 (AQSI…RRRA), 1161 to 1194 (AYTV…RQKS), 1203 to 1236 (ATAL…YEDS), and 1245 to 1278 (GETL…KETE).

It is found in the cell projection. The protein localises to the cilium. Required for normal ciliary development and function. Inhibits disheveled-1-induced canonical Wnt-signaling activity and may also play a role in the control of non-canonical Wnt signaling that regulates planar cell polarity. Probably acts as a molecular switch between different Wnt signaling pathways. Required for proper convergent extension cell movements. The polypeptide is Nephrocystin-3 (nphp3) (Xenopus tropicalis (Western clawed frog)).